We begin with the raw amino-acid sequence, 439 residues long: Xylose isomerase (439 aa).

Residues His101 and Asp104 contribute to the active site. Residues Glu232, Glu268, His271, Asp296, Asp307, Asp309, and Asp339 each coordinate Mg(2+).

The protein belongs to the xylose isomerase family. Homotetramer. Mg(2+) serves as cofactor.

It localises to the cytoplasm. The catalysed reaction is alpha-D-xylose = alpha-D-xylulofuranose. This chain is Xylose isomerase, found in Haemophilus influenzae (strain 86-028NP).